Reading from the N-terminus, the 304-residue chain is tRNA pseudouridine synthase A (304 aa).

Asp65 serves as the catalytic Nucleophile. Tyr123 contacts substrate. The tract at residues 274-304 (HTGQEKPEARLGNGDLESREERPPHEMSPLH) is disordered. Over residues 289–298 (LESREERPPH) the composition is skewed to basic and acidic residues.

This sequence belongs to the tRNA pseudouridine synthase TruA family. As to quaternary structure, homodimer.

It catalyses the reaction uridine(38/39/40) in tRNA = pseudouridine(38/39/40) in tRNA. In terms of biological role, formation of pseudouridine at positions 38, 39 and 40 in the anticodon stem and loop of transfer RNAs. The chain is tRNA pseudouridine synthase A from Gloeobacter violaceus (strain ATCC 29082 / PCC 7421).